A 436-amino-acid polypeptide reads, in one-letter code: Alpha-2 adrenergic receptor (436 aa).

The Extracellular portion of the chain corresponds to 1-27; sequence MDVTQSNATKDDANITVTPWPYTETAA. 2 N-linked (GlcNAc...) asparagine glycosylation sites follow: Asn-7 and Asn-14. A helical transmembrane segment spans residues 28-52; sequence AFIILVVSVIILVSIVGNVLVIVAV. Over 53-64 the chain is Cytoplasmic; that stretch reads LTSRALRAPQNL. Residues 65 to 90 form a helical membrane-spanning segment; that stretch reads FLVSLACADILVATLVIPFSLANEIM. At 91–100 the chain is on the extracellular side; the sequence is GYWFFGSTWC. Cys-100 and Cys-173 are oxidised to a cystine. Residues 101-123 traverse the membrane as a helical segment; sequence AFYLALDVLFCTSSIVHLCAISL. Residues 124 to 144 lie on the Cytoplasmic side of the membrane; that stretch reads DRYWSVTKAVSYNLKRTPKRI. The helical transmembrane segment at 145 to 167 threads the bilayer; sequence KSMIAVVWVISAVISFPPLIMTK. The Extracellular segment spans residues 168 to 178; it reads HDEKECLINDE. A helical transmembrane segment spans residues 179-202; that stretch reads TWYILSSSLVSFFAPGFIMITVYC. The Cytoplasmic segment spans residues 203–329; that stretch reads KIYRVAKQRS…QMREKRFTFV (127 aa). Positions 238–280 are disordered; it reads KFEKESPSSNSSESNQRQEELDDIDLEESATSDNKPKSSRFSN. Residues 257–267 show a composition bias toward acidic residues; sequence ELDDIDLEESA. Residues 330–353 traverse the membrane as a helical segment; that stretch reads LTVVMGVFVLCWFPFFFTYSLHAI. At 354–366 the chain is on the extracellular side; it reads CGDSCEPPEALFK. The chain crosses the membrane as a helical span at residues 367 to 387; that stretch reads LFFWIGYCNSSVNPIIYTIFN. Residues 388–436 are Cytoplasmic-facing; it reads RDFRKAFKKICLLDCAAHLRDSCLGTLGRLNAKCIFECHQKSNQEETAN.

Belongs to the G-protein coupled receptor 1 family.

Its subcellular location is the cell membrane. In terms of biological role, alpha-2 adrenergic receptors mediate the catecholamine-induced inhibition of adenylate cyclase through the action of G proteins. This Carassius auratus (Goldfish) protein is Alpha-2 adrenergic receptor.